The sequence spans 287 residues: Isopentenyl-diphosphate Delta-isomerase 1, chloroplastic (287 aa).

The transit peptide at 1–51 (MTLLLNTTAKLYIAPRTLPFTSSSTFARSPFLRIPSLLKPLSPLTARVSLS) directs the protein to the chloroplast. Substrate is bound at residue Lys-90. Mg(2+)-binding residues include His-94 and His-106. Residues 104 to 256 (LLHRAFSVFL…GLKLSPWFRL (153 aa)) enclose the Nudix hydrolase domain. The substrate site is built by Arg-125 and Lys-129. Residue Cys-141 is part of the active site. Residue Ser-142 coordinates substrate. The Nudix box motif lies at 142 to 172 (SHPLYRESELIDEESLGARNAAQRKLLDELG). 2 residues coordinate Mg(2+): Glu-201 and Glu-203. Glu-203 is an active-site residue.

It belongs to the IPP isomerase type 1 family. In terms of assembly, monomer. It depends on Mg(2+) as a cofactor. Mainly expressed in roots and trichomes and, to a lower extent, in leaves, flowers and stems.

The protein localises to the plastid. It is found in the chloroplast. It carries out the reaction isopentenyl diphosphate = dimethylallyl diphosphate. It participates in isoprenoid biosynthesis; dimethylallyl diphosphate biosynthesis; dimethylallyl diphosphate from isopentenyl diphosphate: step 1/1. The protein operates within porphyrin-containing compound metabolism; chlorophyll biosynthesis. In terms of biological role, catalyzes the 1,3-allylic rearrangement of the homoallylic substrate isopentenyl (IPP) to its highly electrophilic allylic isomer, dimethylallyl diphosphate (DMAPP). The protein is Isopentenyl-diphosphate Delta-isomerase 1, chloroplastic of Cannabis sativa (Hemp).